The following is a 129-amino-acid chain: Capsid protein (129 aa).

The viral RNA-binding stretch occupies residues 31-104; that stretch reads EWISSNSRSQ…FATNSDCELI (74 aa).

This sequence belongs to the Leviviricetes capsid protein family. In terms of assembly, homodimer. The capsid proteins form dimers that assemble by group of 5. Twelve such pentamers are linked together with free dimers. The homodimers binds to the viral RNA via an operator hairpin, but also to many other RNA sequences in the viral genome; this interaction probably shifts the virus from the replicative to the assembly phase and ensures specific encapsidation of the viral genome.

The protein resides in the virion. Functionally, capsid protein self-assembles to form an icosahedral capsid with a T=3 symmetry, about 26 nm in diameter, and consisting of 89 capsid proteins dimers (178 capsid proteins). Involved in viral genome encapsidation through the interaction between a capsid protein dimer and the multiple packaging signals present in the RNA genome. The capsid also contains 1 copy of the A2 maturation protein. Acts as a translational repressor of viral replicase synthesis late in infection. This latter function is the result of capsid protein interaction with an RNA hairpin which contains the replicase ribosome-binding site. The polypeptide is Capsid protein (Escherichia coli (Bacteriophage R17)).